Consider the following 436-residue polypeptide: Anhydro-N-acetylmuramic acid kinase (436 aa).

32 to 39 (GTSLDGMD) is a binding site for ATP.

The protein belongs to the anhydro-N-acetylmuramic acid kinase family.

The enzyme catalyses 1,6-anhydro-N-acetyl-beta-muramate + ATP + H2O = N-acetyl-D-muramate 6-phosphate + ADP + H(+). Its pathway is amino-sugar metabolism; 1,6-anhydro-N-acetylmuramate degradation. It participates in cell wall biogenesis; peptidoglycan recycling. In terms of biological role, catalyzes the specific phosphorylation of 1,6-anhydro-N-acetylmuramic acid (anhMurNAc) with the simultaneous cleavage of the 1,6-anhydro ring, generating MurNAc-6-P. Is required for the utilization of anhMurNAc either imported from the medium or derived from its own cell wall murein, and thus plays a role in cell wall recycling. The sequence is that of Anhydro-N-acetylmuramic acid kinase from Psychrobacter arcticus (strain DSM 17307 / VKM B-2377 / 273-4).